The sequence spans 690 residues: eEF1A lysine and N-terminal methyltransferase (690 aa).

Residues 427 to 451 form a disordered region; sequence AAASSASKKKNKKKAKQPASTGAKD. The segment covering 433-442 has biased composition (basic residues); sequence SKKKNKKKAK.

It belongs to the methyltransferase superfamily.

The catalysed reaction is L-lysyl-[protein] + S-adenosyl-L-methionine = N(6)-methyl-L-lysyl-[protein] + S-adenosyl-L-homocysteine + H(+). It catalyses the reaction N(6)-methyl-L-lysyl-[protein] + S-adenosyl-L-methionine = N(6),N(6)-dimethyl-L-lysyl-[protein] + S-adenosyl-L-homocysteine + H(+). It carries out the reaction N-terminal glycyl-L-lysyl-L-glutamyl-[protein] + 3 S-adenosyl-L-methionine = N-terminal N,N,N-trimethyl-glycyl-L-lysyl-L-glutamyl-[protein] + 3 S-adenosyl-L-homocysteine + 3 H(+). Dual methyltransferase that catalyzes methylation of elongation factor 1-alpha (eef1a1 and eef1a2) at two different positions, and is therefore involved in the regulation of mRNA translation. Via its C-terminus, methylates the N-terminus of eef1a1 and eef1a2. Via its N-terminus dimethylates lysine residues of eef1a1 and eef1a2. This Danio rerio (Zebrafish) protein is eEF1A lysine and N-terminal methyltransferase (mettl13).